Here is a 325-residue protein sequence, read N- to C-terminus: Putative gluconeogenesis factor (325 aa).

It belongs to the gluconeogenesis factor family.

It localises to the cytoplasm. Required for morphogenesis under gluconeogenic growth conditions. The sequence is that of Putative gluconeogenesis factor from Streptococcus pyogenes serotype M1.